Reading from the N-terminus, the 410-residue chain is Probable peptidoglycan glycosyltransferase FtsW (410 aa).

The next 9 helical transmembrane spans lie at 39–59 (LDPLLIWSATGLLLIGLVMVY), 78–98 (YFLLRHAMFLAVGIGAGLAAF), 108–128 (FAPWLFLIGVMLLVVVLIPGV), 177–197 (GFLPMAAMILLVGFLLLGEPD), 198–218 (FGAFVVITAIAFGVLFLGGIN), 221–241 (VFALLALVAVIGFMLLIWLSP), 303–323 (IAEELGFAGVLTVIALFAILI), 342–362 (GLVAMGIGLWLGVQSFINMGV), and 374–394 (LPLMSFGGSGIVANCLALAIL).

The protein belongs to the SEDS family. FtsW subfamily.

It is found in the cell inner membrane. The enzyme catalyses [GlcNAc-(1-&gt;4)-Mur2Ac(oyl-L-Ala-gamma-D-Glu-L-Lys-D-Ala-D-Ala)](n)-di-trans,octa-cis-undecaprenyl diphosphate + beta-D-GlcNAc-(1-&gt;4)-Mur2Ac(oyl-L-Ala-gamma-D-Glu-L-Lys-D-Ala-D-Ala)-di-trans,octa-cis-undecaprenyl diphosphate = [GlcNAc-(1-&gt;4)-Mur2Ac(oyl-L-Ala-gamma-D-Glu-L-Lys-D-Ala-D-Ala)](n+1)-di-trans,octa-cis-undecaprenyl diphosphate + di-trans,octa-cis-undecaprenyl diphosphate + H(+). Its pathway is cell wall biogenesis; peptidoglycan biosynthesis. Its function is as follows. Peptidoglycan polymerase that is essential for cell division. The polypeptide is Probable peptidoglycan glycosyltransferase FtsW (Aromatoleum aromaticum (strain DSM 19018 / LMG 30748 / EbN1) (Azoarcus sp. (strain EbN1))).